The primary structure comprises 1366 residues: DNA-directed RNA polymerase subunit beta' (1366 aa).

The interval 1-40 is disordered; sequence MTSTSPKSRRSSGKGRKGSKKKGKQVSQIPPLSKTPPSFR. Positions 7 to 24 are enriched in basic residues; the sequence is KSRRSSGKGRKGSKKKGK. Over residues 25–38 the composition is skewed to polar residues; sequence QVSQIPPLSKTPPS. Positions 250, 317, 324, and 327 each coordinate Zn(2+). Positions 1299 to 1366 are disordered; it reads TAAKSTSVLD…LQEEGLLADE (68 aa). A compositionally biased stretch (low complexity) spans 1353 to 1366; sequence ALEGLQEEGLLADE.

The protein belongs to the RNA polymerase beta' chain family. RpoC2 subfamily. In cyanobacteria the RNAP catalytic core is composed of 2 alpha, 1 beta, 1 beta', 1 gamma and 1 omega subunit. When a sigma factor is associated with the core the holoenzyme is formed, which can initiate transcription. It depends on Zn(2+) as a cofactor.

It carries out the reaction RNA(n) + a ribonucleoside 5'-triphosphate = RNA(n+1) + diphosphate. Its function is as follows. DNA-dependent RNA polymerase catalyzes the transcription of DNA into RNA using the four ribonucleoside triphosphates as substrates. This Prochlorococcus marinus (strain MIT 9211) protein is DNA-directed RNA polymerase subunit beta'.